We begin with the raw amino-acid sequence, 49 residues long: Beta-toxin Rc1 (49 aa).

Disulfide bonds link C15-C31, C22-C40, and C26-C42.

Belongs to the long (4 C-C) scorpion toxin superfamily. Sodium channel inhibitor family. Beta subfamily. In terms of tissue distribution, expressed by the venom gland.

It localises to the secreted. Beta toxins bind voltage-independently at site-4 of sodium channels (Nav) and shift the voltage of activation toward more negative potentials thereby affecting sodium channel activation and promoting spontaneous and repetitive firing. This toxin acts on X.laevis Nav1.6/SCN8A and insect BgNav1 channels, and also displays a small but significant effect on X.laevis Nav1.4/SCN4A channels. In mice induces nociception (licking and lifting behaviors) during the first 15 minutes after injection, and increases the release of TNF-alpha in J774.1 cells. The protein is Beta-toxin Rc1 of Rhopalurus crassicauda (Scorpion).